Consider the following 766-residue polypeptide: Pyrophosphate-energized vacuolar membrane proton pump (766 aa).

Topologically, residues 2–8 are intravacuolar; sequence GAAILPD. Residues 9–35 form a helical membrane-spanning segment; sequence LGTEILIPVCAVIGIAFALFQWLLVSK. Residues 36–84 are Cytoplasmic-facing; that stretch reads VKLSAVRDASPNAAAKNGYNDYLIEEEEGINDHNVVVKCAEIQNAISEG. Residues 85 to 114 traverse the membrane as a helical segment; it reads ATSFLFTEYKYVGIFMVAFAILIFLFLGSV. The Intravacuolar portion of the chain corresponds to 115–135; that stretch reads EGFSTSPQACSYDKTKTCKPA. Cys124 and Cys132 are joined by a disulfide. Residues 136-163 form a helical membrane-spanning segment; that stretch reads LATAIFSTVSFLLGGVTSLVSGFLGMKI. Residues 164 to 186 lie on the Cytoplasmic side of the membrane; that stretch reads ATYANARTTLEARKGVGKAFITA. The helical transmembrane segment at 187–216 threads the bilayer; it reads FRSGAVMGFLLAANGLLVLYIAINLFKIYY. Residues 217 to 219 lie on the Intravacuolar side of the membrane; it reads GDD. A helical membrane pass occupies residues 220 to 248; sequence WGGLFEAITGYGLGGSSMALFGRVGGGIY. Topologically, residues 249–286 are cytoplasmic; that stretch reads TKAADVGADLVGKVERNIPEDDPRNPAVIADNVGDNVG. Residue Lys250 participates in substrate binding. Asp253, Asp257, and Asp283 together coordinate Mg(2+). The chain crosses the membrane as a helical span at residues 287-312; that stretch reads DIAGMGSDLFGSYAESSCAALVVASI. The Intravacuolar portion of the chain corresponds to 313 to 320; that stretch reads SSFGLNHE. The helical transmembrane segment at 321-346 threads the bilayer; it reads LTAMLYPLIVSSVGILVCLLTTLFAT. Over 347–354 the chain is Cytoplasmic; sequence DFFEIKAV. A helical membrane pass occupies residues 355–382; the sequence is KEIEPALKKQLVISTVLMTIGVAVVSFV. Topologically, residues 383–401 are intravacuolar; that stretch reads ALPTSFTIFNFGVQKDVKS. The helical transmembrane segment at 402–425 threads the bilayer; it reads WQLFLCVAVGLWAGLIIGFVTEYY. Over 426–447 the chain is Cytoplasmic; that stretch reads TSNAYSPVQDVADSCRTGAATN. Residues 448–472 form a helical membrane-spanning segment; that stretch reads VIFGLALGYKSVIIPIFAIAISIFV. Residues 473–478 lie on the Intravacuolar side of the membrane; that stretch reads SFTFAA. A helical transmembrane segment spans residues 479 to 505; sequence MYGIAVAALGMLSTIATGLAIDAYGPI. At 506–534 the chain is on the cytoplasmic side; that stretch reads SDNAGGIAEMAGMSHRIRERTDALDAAGN. Asp507 and Asn534 together coordinate Mg(2+). The helical transmembrane segment at 535 to 563 threads the bilayer; that stretch reads TTAAIGKGFAIGSAALVSLALFGAFVSRA. The Intravacuolar portion of the chain corresponds to 564 to 573; the sequence is SITTVDVLTP. A helical membrane pass occupies residues 574–602; the sequence is KVFIGLIVGAMLPYWFSAMTMKSVGSAAL. The Cytoplasmic portion of the chain corresponds to 603 to 631; sequence KMVEEVRRQFNTIPGLMEGTAKPDYATCV. Residues 632-660 traverse the membrane as a helical segment; that stretch reads KISTDASIKEMIPPGALVMLTPLVVGILF. Position 661 (Gly661) is a topological domain, intravacuolar. The chain crosses the membrane as a helical span at residues 662-689; the sequence is VETLSGVLAGSLVSGVQIAISASNTGGA. Residues 690-732 lie on the Cytoplasmic side of the membrane; it reads WDNAKKYIEAGASEHARSLGPKGSDCHKAAVIGDTIGDPLKDT. Residues Asp691 and Asp727 each coordinate Mg(2+). Lys730 serves as a coordination point for substrate. The chain crosses the membrane as a helical span at residues 733–758; the sequence is SGPSLNILIKLMAVESLVFAPFFATH. Over 759–765 the chain is Intravacuolar; that stretch reads GGLLFKI.

It belongs to the H(+)-translocating pyrophosphatase (TC 3.A.10) family. K(+)-stimulated subfamily. Homodimer.

The protein localises to the vacuole membrane. It carries out the reaction diphosphate + H2O + H(+)(in) = 2 phosphate + 2 H(+)(out). With respect to regulation, inhibited by excess pyrophosphate as well as excess Mg(2+). Inhibition by ATP, GTP, and CTP is reversed by increasing the Mg(2+) concentration. This suggests that the substrate is a particular metal complex such as MgPPi(2-). Modification of Asp-283 with DCCD abolishes pyrophosphatase activity. Its function is as follows. Proton-translocating inorganic pyrophosphatase that contributes to the transtonoplast (from cytosol to vacuole lumen) H(+)-electrochemical potential difference. It establishes a proton gradient of similar and often greater magnitude than the H(+)-ATPase on the same membrane. The chain is Pyrophosphate-energized vacuolar membrane proton pump from Vigna radiata var. radiata (Mung bean).